A 370-amino-acid polypeptide reads, in one-letter code: Divinyl chlorophyll a/b light-harvesting protein PcbD (370 aa).

Transmembrane regions (helical) follow at residues 27 to 47 (FIASHIGHTGLIAFAAGGSTL), 88 to 108 (VAAVAIVHLVLSMVYGGGALL), 140 to 160 (FILGHHLFFFGMACIAFVEWA), 201 to 221 (VMGGHAFLAFAELTGATIHMV), 248 to 268 (AVLSWSLAGIGWMAIVAAFWA), and 315 to 335 (LVNVHYYFGFFFLQGHFWHAL).

The protein belongs to the PsbB/PsbC family. IsiA/Pcb subfamily. In terms of assembly, the antenna complex consists of divinyl chlorophylls (a and b) and divinyl chlorophyll a/b binding proteins and binds more divinyl chlorophyll b than does the antenna complex from high-light-adapted Prochlorococcus. Requires divinyl chlorophyll a as cofactor. Divinyl chlorophyll b is required as a cofactor.

It is found in the cellular thylakoid membrane. The antenna complex functions as a light receptor, it captures and delivers excitation energy to photosystems II and I. The Prochlorales pcb genes are not related to higher plant LHCs. This chain is Divinyl chlorophyll a/b light-harvesting protein PcbD (pcbD), found in Prochlorococcus marinus (strain NATL2A).